The primary structure comprises 277 residues: Urease accessory protein UreD (277 aa).

It belongs to the UreD family. UreD, UreF and UreG form a complex that acts as a GTP-hydrolysis-dependent molecular chaperone, activating the urease apoprotein by helping to assemble the nickel containing metallocenter of UreC. The UreE protein probably delivers the nickel.

It localises to the cytoplasm. In terms of biological role, required for maturation of urease via the functional incorporation of the urease nickel metallocenter. This Sinorhizobium medicae (strain WSM419) (Ensifer medicae) protein is Urease accessory protein UreD.